A 337-amino-acid polypeptide reads, in one-letter code: Peptide methionine sulfoxide reductase MsrA/MsrB (337 aa).

The tract at residues 28–181 is peptide methionine sulfoxide reductase A; it reads KDIYLAGGCF…PGGYCHVDLS (154 aa). Cys36 is a catalytic residue. Residues 198–321 form the MsrB domain; that stretch reads KDELKAKLSD…NGASLKFIPL (124 aa). Cys310 (nucleophile) is an active-site residue.

In the N-terminal section; belongs to the MsrA Met sulfoxide reductase family. It in the C-terminal section; belongs to the MsrB Met sulfoxide reductase family.

The enzyme catalyses L-methionyl-[protein] + [thioredoxin]-disulfide + H2O = L-methionyl-(S)-S-oxide-[protein] + [thioredoxin]-dithiol. The catalysed reaction is [thioredoxin]-disulfide + L-methionine + H2O = L-methionine (S)-S-oxide + [thioredoxin]-dithiol. It catalyses the reaction L-methionyl-[protein] + [thioredoxin]-disulfide + H2O = L-methionyl-(R)-S-oxide-[protein] + [thioredoxin]-dithiol. Has an important function as a repair enzyme for proteins that have been inactivated by oxidation. Catalyzes the reversible oxidation-reduction of methionine sulfoxide in proteins to methionine. The polypeptide is Peptide methionine sulfoxide reductase MsrA/MsrB (msrAB) (Campylobacter fetus).